A 595-amino-acid polypeptide reads, in one-letter code: Zinc finger protein 467 (595 aa).

Residues 1 to 67 (MRETLEALSS…EEGAHTEQAE (67 aa)) are disordered. A Glycyl lysine isopeptide (Lys-Gly) (interchain with G-Cter in SUMO2) cross-link involves residue Lys97. 6 C2H2-type zinc fingers span residues 160–182 (YGCG…QRLH), 188–210 (CACP…QRSH), 216–238 (FPCS…LRTH), 244–266 (YPCA…QKTH), 272–294 (FPCT…QRIH), and 300–322 (YQCA…QRVH). The segment at 313 to 350 (QHLVRHQRVHQTAGPARPSPDSSASPHSTAPSPTPSFP) is disordered. Low complexity predominate over residues 325-343 (AGPARPSPDSSASPHSTAP). 6 C2H2-type zinc fingers span residues 355-377 (FACS…QCLH), 431-453 (FFCP…PRVH), 459-481 (FACT…SRAH), 487-509 (FACA…QAVH), 515-537 (HACA…QAIH), and 543-565 (FSCP…QLIH). Lys368 is covalently cross-linked (Glycyl lysine isopeptide (Lys-Gly) (interchain with G-Cter in SUMO2)).

This sequence belongs to the krueppel C2H2-type zinc-finger protein family. Interacts with STAT3. Enhances STAT3 activity by keeping it in the nucleus.

It localises to the nucleus. In terms of biological role, transcription factor that promotes adipocyte differentiation and suppresses osteoblast differentiation in the bone marrow. Enhances the osteoclast-supporting ability of stromal cells. Binds with STAT3 the consensus sequence 5'-CTTCTGGGAAGA-3' of the acute phase response element (APRE). Transactivates several promoters including FOS, OSM and PPARG. Recruits a histone deacetylase complex. This is Zinc finger protein 467 (ZNF467) from Homo sapiens (Human).